The primary structure comprises 422 residues: Ubiquitin-conjugating enzyme E2 Q1 (422 aa).

N-acetylmethionine is present on methionine 1. Over residues 1 to 15 (MQQPQPQGQQQPGPG) the composition is skewed to low complexity. Disordered stretches follow at residues 1–40 (MQQPQPQGQQQPGPGQQLGGQGAAPGAGGGPGGGPGPGPC) and 174–221 (PLPA…EDDG). The segment covering 16-35 (QQLGGQGAAPGAGGGPGGGP) has biased composition (gly residues). Residues 185 to 200 (VSSEDEDEEMPEDTED) are compositionally biased toward acidic residues. Over residues 212–221 (AEGKKSEDDG) the composition is skewed to basic and acidic residues. The UBC core domain maps to 251–415 (QATDRLMKEL…VQIHEKNGWY (165 aa)). The active-site Glycyl thioester intermediate is the cysteine 351.

This sequence belongs to the ubiquitin-conjugating enzyme family. Monomer and homodimer. Only the homodimer is linked to ubiquitin through thiolester activation. Interacts (via N-terminus) with B4GALT1 (via N-terminal cytoplasmic domain). The interaction is direct. Post-translationally, autoubiquitinated in vitro in the presence of NEDD4L. Widely expressed.

The protein resides in the nucleus. The protein localises to the cell projection. It localises to the filopodium. Its subcellular location is the cytoplasm. It is found in the cytosol. The enzyme catalyses S-ubiquitinyl-[E1 ubiquitin-activating enzyme]-L-cysteine + [E2 ubiquitin-conjugating enzyme]-L-cysteine = [E1 ubiquitin-activating enzyme]-L-cysteine + S-ubiquitinyl-[E2 ubiquitin-conjugating enzyme]-L-cysteine.. It functions in the pathway protein modification; protein ubiquitination. Catalyzes the covalent attachment of ubiquitin to other proteins. May be involved in hormonal homeostasis in females. Involved in regulation of B4GALT1 cell surface expression, B4GALT1-mediated cell adhesion to laminin and embryoid body formation. This is Ubiquitin-conjugating enzyme E2 Q1 (UBE2Q1) from Homo sapiens (Human).